The following is a 441-amino-acid chain: Ribosomal protein uS12 methylthiotransferase RimO (441 aa).

An MTTase N-terminal domain is found at 8-118 (PKIGFVSLGC…VLEHVHHYVP (111 aa)). 6 residues coordinate [4Fe-4S] cluster: Cys17, Cys53, Cys82, Cys150, Cys154, and Cys157. The 238-residue stretch at 136–373 (LTPRHYAYLK…MQLQQQISAE (238 aa)) folds into the Radical SAM core domain. Residues 376-441 (QEKVGREILV…DEYDLWGSRV (66 aa)) form the TRAM domain.

It belongs to the methylthiotransferase family. RimO subfamily. Requires [4Fe-4S] cluster as cofactor.

The protein resides in the cytoplasm. The enzyme catalyses L-aspartate(89)-[ribosomal protein uS12]-hydrogen + (sulfur carrier)-SH + AH2 + 2 S-adenosyl-L-methionine = 3-methylsulfanyl-L-aspartate(89)-[ribosomal protein uS12]-hydrogen + (sulfur carrier)-H + 5'-deoxyadenosine + L-methionine + A + S-adenosyl-L-homocysteine + 2 H(+). In terms of biological role, catalyzes the methylthiolation of an aspartic acid residue of ribosomal protein uS12. This chain is Ribosomal protein uS12 methylthiotransferase RimO, found in Citrobacter koseri (strain ATCC BAA-895 / CDC 4225-83 / SGSC4696).